Consider the following 544-residue polypeptide: Membrane protein insertase YidC (544 aa).

Helical transmembrane passes span 15–35 (LFLI…MLSF), 321–341 (LWYL…DVIP), 343–363 (WGLS…PLTF), 409–429 (LGGC…YSLV), and 506–526 (MPIM…IYWI).

This sequence belongs to the OXA1/ALB3/YidC family. Type 1 subfamily. As to quaternary structure, interacts with the Sec translocase complex via SecD. Specifically interacts with transmembrane segments of nascent integral membrane proteins during membrane integration.

It is found in the cell inner membrane. Functionally, required for the insertion and/or proper folding and/or complex formation of integral membrane proteins into the membrane. Involved in integration of membrane proteins that insert both dependently and independently of the Sec translocase complex, as well as at least some lipoproteins. Aids folding of multispanning membrane proteins. In Borrelia garinii subsp. bavariensis (strain ATCC BAA-2496 / DSM 23469 / PBi) (Borreliella bavariensis), this protein is Membrane protein insertase YidC.